A 447-amino-acid chain; its full sequence is Probable asparagine--tRNA ligase, cytoplasmic (447 aa).

This sequence belongs to the class-II aminoacyl-tRNA synthetase family.

It localises to the cytoplasm. The enzyme catalyses tRNA(Asn) + L-asparagine + ATP = L-asparaginyl-tRNA(Asn) + AMP + diphosphate + H(+). This chain is Probable asparagine--tRNA ligase, cytoplasmic, found in Vairimorpha ceranae (strain BRL01) (Microsporidian parasite).